The following is a 76-amino-acid chain: Putative antitoxin VapB2 (76 aa).

The protein belongs to the UPF0330 family.

In terms of biological role, possibly the antitoxin component of a type II toxin-antitoxin (TA) system. Its cognate toxin is VapC2 (Potential). The sequence is that of Putative antitoxin VapB2 (vapB2) from Pyrococcus abyssi (strain GE5 / Orsay).